A 213-amino-acid polypeptide reads, in one-letter code: Ras-related protein Rab-39B (213 aa).

Ser17, Gly20, Lys21, Ser22, Cys23, Ser37, and Thr40 together coordinate GTP. Ser22 contributes to the Mg(2+) binding site. The switch-I stretch occupies residues 35-43; the sequence is QVSDPTVGV. Residues Thr40 and Asp64 each contribute to the Mg(2+) site. Residues Gly67, His123, Lys124, Asp126, Ala154, and Arg155 each coordinate GTP. The switch-II stretch occupies residues 67–83; the sequence is GQERFRSITRAYYRNSV. Ser201 carries the phosphoserine modification. S-geranylgeranyl cysteine attachment occurs at residues Cys211 and Cys213. Position 213 is a cysteine methyl ester (Cys213).

The protein belongs to the small GTPase superfamily. Rab family. Interacts (GDP-bound) with C9orf72; C9orf72 in complex with SMCR8 acts as a GEF for RAB39B. Interacts (in GTP-bound form) with PICK1 (via PDZ domain); a PICK1 homodimer may allow simultaneous association of RAB39B and GRIA2 to PICK1 which is involved in GRIA2 trafficking. Interacts with isoform c of RASSF1; the interaction is strong. Interacts with isoform a of RASSF1; the interaction is weak. Interacts with the DLG4/PSD-95. Interacts (GTP-bound) with HOPS complex components VPS39 and VPS41. Mg(2+) is required as a cofactor.

It is found in the cell membrane. The protein resides in the cytoplasmic vesicle membrane. The protein localises to the golgi apparatus. It localises to the cytoplasmic vesicle. Its subcellular location is the autophagosome membrane. It is found in the autolysosome membrane. The catalysed reaction is GTP + H2O = GDP + phosphate + H(+). Its activity is regulated as follows. Regulated by guanine nucleotide exchange factors (GEFs) including C9orf72-SMCR8 complex, which promote the exchange of bound GDP for free GTP. Regulated by GTPase activating proteins (GAPs) which increase the GTP hydrolysis activity. Inhibited by GDP dissociation inhibitors (GDIs). The small GTPases Rab are key regulators of intracellular membrane trafficking, from the formation of transport vesicles to their fusion with membranes. Rabs cycle between an inactive GDP-bound form and an active GTP-bound form that is able to recruit to membranes different sets of downstream effectors directly responsible for vesicle formation, movement, tethering and fusion. RAB39B is involved in autophagy and may function in autophagosome formation. Binds downstream effector PICK1 to ensure selectively GRIA2 exit from the endoplasmic reticulum to the Golgi and to regulate AMPAR composition at the post-synapses and thus synaptic transmission. May regulate the homeostasis of SNCA/alpha-synuclein. This chain is Ras-related protein Rab-39B (RAB39B), found in Bos taurus (Bovine).